The primary structure comprises 359 residues: Tropomodulin-1 (359 aa).

The segment at 36–61 is disordered; sequence ELDPDNALLPAGLRQKDQTTKAPTGP. The segment at 39–138 is tropomyosin-binding; that stretch reads PDNALLPAGL…CDIAAILGMH (100 aa).

This sequence belongs to the tropomodulin family. Binds to the N-terminus of tropomyosin and to actin. Interacts with FLII. In terms of tissue distribution, highly expressed in the erythrocyte, heart and skeletal muscle.

The protein localises to the cytoplasm. Its subcellular location is the cytoskeleton. Its function is as follows. Blocks the elongation and depolymerization of the actin filaments at the pointed end. The Tmod/TM complex contributes to the formation of the short actin protofilament, which in turn defines the geometry of the membrane skeleton. May play an important role in regulating the organization of actin filaments by preferentially binding to a specific tropomyosin isoform at its N-terminus. The polypeptide is Tropomodulin-1 (TMOD1) (Homo sapiens (Human)).